The chain runs to 152 residues: Nucleoside diphosphate kinase (152 aa).

Residues Lys11, Phe59, Arg87, Thr93, Arg104, and Asn114 each contribute to the ATP site. His117 serves as the catalytic Pros-phosphohistidine intermediate.

It belongs to the NDK family. Homotetramer. It depends on Mg(2+) as a cofactor.

Its subcellular location is the cytoplasm. The enzyme catalyses a 2'-deoxyribonucleoside 5'-diphosphate + ATP = a 2'-deoxyribonucleoside 5'-triphosphate + ADP. It carries out the reaction a ribonucleoside 5'-diphosphate + ATP = a ribonucleoside 5'-triphosphate + ADP. Its function is as follows. Major role in the synthesis of nucleoside triphosphates other than ATP. The ATP gamma phosphate is transferred to the NDP beta phosphate via a ping-pong mechanism, using a phosphorylated active-site intermediate. In Prochlorococcus marinus (strain MIT 9215), this protein is Nucleoside diphosphate kinase.